Consider the following 368-residue polypeptide: Polymerase delta-interacting protein 2 (368 aa).

A mitochondrion-targeting transit peptide spans 1 to 21 (MAGCVARRALAVGSRWWSRSL). Residues 235–360 (RETTENIRVT…FSLESNKDEK (126 aa)) form the ApaG domain. Thr292 carries the phosphothreonine modification.

In terms of assembly, interacts with PCNA and POLD2. Interacts with SSBP1. Interacts with PRIMPOL; leading to enhance DNA polymerase activity of PRIMPOL. Interacts with POLH. Interacts with POLD1; leading to stimulate DNA polymerase activity of POLD1.

Its subcellular location is the mitochondrion matrix. The protein resides in the nucleus. Involved in DNA damage tolerance by regulating translesion synthesis (TLS) of templates carrying DNA damage lesions such as 8oxoG and abasic sites. May act by stimulating activity of DNA polymerases involved in TLS, such as PRIMPOL and polymerase delta (POLD1). The polypeptide is Polymerase delta-interacting protein 2 (Mus musculus (Mouse)).